Consider the following 71-residue polypeptide: Large ribosomal subunit protein bL31 (71 aa).

Positions 16, 18, 37, and 40 each coordinate Zn(2+).

The protein belongs to the bacterial ribosomal protein bL31 family. Type A subfamily. In terms of assembly, part of the 50S ribosomal subunit. It depends on Zn(2+) as a cofactor.

Binds the 23S rRNA. This chain is Large ribosomal subunit protein bL31, found in Marinomonas sp. (strain MWYL1).